The sequence spans 446 residues: Ribosomal protein uS12 methylthiotransferase RimO (446 aa).

Residues 4–119 (YKVGMVSLGC…IDKVIKEFIE (116 aa)) enclose the MTTase N-terminal domain. Residues C13, C48, C82, C157, C161, and C164 each coordinate [4Fe-4S] cluster. The 231-residue stretch at 143-373 (TTQKESAYIR…MLSQEKISND (231 aa)) folds into the Radical SAM core domain. Residues 376 to 442 (KLKVNKKYDI…DYDLIGVVED (67 aa)) form the TRAM domain.

The protein belongs to the methylthiotransferase family. RimO subfamily. [4Fe-4S] cluster is required as a cofactor.

Its subcellular location is the cytoplasm. It catalyses the reaction L-aspartate(89)-[ribosomal protein uS12]-hydrogen + (sulfur carrier)-SH + AH2 + 2 S-adenosyl-L-methionine = 3-methylsulfanyl-L-aspartate(89)-[ribosomal protein uS12]-hydrogen + (sulfur carrier)-H + 5'-deoxyadenosine + L-methionine + A + S-adenosyl-L-homocysteine + 2 H(+). Its function is as follows. Catalyzes the methylthiolation of an aspartic acid residue of ribosomal protein uS12. The polypeptide is Ribosomal protein uS12 methylthiotransferase RimO (Clostridium botulinum (strain Eklund 17B / Type B)).